A 239-amino-acid polypeptide reads, in one-letter code: Sugar fermentation stimulation protein homolog (239 aa).

It belongs to the SfsA family.

The polypeptide is Sugar fermentation stimulation protein homolog (Caulobacter vibrioides (strain ATCC 19089 / CIP 103742 / CB 15) (Caulobacter crescentus)).